The primary structure comprises 20 residues: Phenol-soluble modulin alpha 4 peptide (20 aa).

It belongs to the phenol-soluble modulin alpha peptides family.

Peptide which can recruit, activate and subsequently lyse neutrophils, thus eliminating the main cellular defense against infection. This is Phenol-soluble modulin alpha 4 peptide (psmA4) from Staphylococcus aureus (strain bovine RF122 / ET3-1).